A 90-amino-acid chain; its full sequence is LYR motif-containing protein 2 (90 aa).

Residues 1–19 (MASSRLPASALTLKQFIQR) constitute a mitochondrion transit peptide.

It belongs to the complex I LYR family.

Its subcellular location is the mitochondrion. In terms of biological role, involved in efficient integration of the N-module into mitochondrial respiratory chain complex I. The polypeptide is LYR motif-containing protein 2 (lyrm2) (Salmo salar (Atlantic salmon)).